Consider the following 155-residue polypeptide: Transcriptional repressor NrdR (155 aa).

Residues 3–34 (CPYCGHLEDRVVDSRETQDGQATRRRRACLSC) fold into a zinc finger. The 91-residue stretch at 49-139 (PQVVKKDGRR…VYRAFRDVGE (91 aa)) folds into the ATP-cone domain.

The protein belongs to the NrdR family. The cofactor is Zn(2+).

In terms of biological role, negatively regulates transcription of bacterial ribonucleotide reductase nrd genes and operons by binding to NrdR-boxes. This Anaeromyxobacter dehalogenans (strain 2CP-1 / ATCC BAA-258) protein is Transcriptional repressor NrdR.